The chain runs to 69 residues: Calcium-binding protein (69 aa).

2 EF-hand domains span residues 2–37 and 38–69; these read VNRT…VNCP and FKKE…VLCS. Aspartate 15, aspartate 17, serine 19, lysine 21, glutamate 26, aspartate 51, aspartate 53, aspartate 55, glutamine 57, and glutamate 62 together coordinate Ca(2+).

This Schistosoma mansoni (Blood fluke) protein is Calcium-binding protein.